Here is a 143-residue protein sequence, read N- to C-terminus: ATP synthase subunit b' (143 aa).

The chain crosses the membrane as a helical span at residues 6–26 (ATLPLMALQFVLLAIILNAIF).

Belongs to the ATPase B chain family. As to quaternary structure, F-type ATPases have 2 components, F(1) - the catalytic core - and F(0) - the membrane proton channel. F(1) has five subunits: alpha(3), beta(3), gamma(1), delta(1), epsilon(1). F(0) has four main subunits: a(1), b(1), b'(1) and c(10-14). The alpha and beta chains form an alternating ring which encloses part of the gamma chain. F(1) is attached to F(0) by a central stalk formed by the gamma and epsilon chains, while a peripheral stalk is formed by the delta, b and b' chains.

Its subcellular location is the cellular thylakoid membrane. Functionally, f(1)F(0) ATP synthase produces ATP from ADP in the presence of a proton or sodium gradient. F-type ATPases consist of two structural domains, F(1) containing the extramembraneous catalytic core and F(0) containing the membrane proton channel, linked together by a central stalk and a peripheral stalk. During catalysis, ATP synthesis in the catalytic domain of F(1) is coupled via a rotary mechanism of the central stalk subunits to proton translocation. Its function is as follows. Component of the F(0) channel, it forms part of the peripheral stalk, linking F(1) to F(0). The b'-subunit is a diverged and duplicated form of b found in plants and photosynthetic bacteria. In Crocosphaera subtropica (strain ATCC 51142 / BH68) (Cyanothece sp. (strain ATCC 51142)), this protein is ATP synthase subunit b'.